The following is a 566-amino-acid chain: Alpha-amylase (566 aa).

The signal sequence occupies residues 1–28; the sequence is MARRLATASLAVLAAAATALTAPTPAAA. Ca(2+) contacts are provided by asparagine 120, glutamine 166, and aspartate 175. Residue aspartate 205 is the Nucleophile of the active site. Histidine 209 lines the Ca(2+) pocket. Residue glutamate 232 is the Proton donor of the active site. Positions 465–566 constitute a CBM20 domain; sequence GPGTGQTSAS…ALTLNDTWRG (102 aa).

It belongs to the glycosyl hydrolase 13 family. As to quaternary structure, monomer. It depends on Ca(2+) as a cofactor.

It carries out the reaction Endohydrolysis of (1-&gt;4)-alpha-D-glucosidic linkages in polysaccharides containing three or more (1-&gt;4)-alpha-linked D-glucose units.. The chain is Alpha-amylase (amy) from Streptomyces griseus.